The primary structure comprises 62 residues: Protein DsrB (62 aa).

It belongs to the DsrB family.

This Shigella flexneri serotype 5b (strain 8401) protein is Protein DsrB.